The following is a 584-amino-acid chain: Aspartate--tRNA ligase (584 aa).

Glu-169 contributes to the L-aspartate binding site. The aspartate stretch occupies residues 193–196; it reads QLFK. Position 215 (Arg-215) interacts with L-aspartate. Residues 215–217 and Gln-224 contribute to the ATP site; that span reads RDE. His-446 is an L-aspartate binding site. ATP is bound at residue Glu-480. Arg-487 serves as a coordination point for L-aspartate. 532 to 535 serves as a coordination point for ATP; that stretch reads GLDR.

The protein belongs to the class-II aminoacyl-tRNA synthetase family. Type 1 subfamily. Homodimer.

Its subcellular location is the cytoplasm. The catalysed reaction is tRNA(Asp) + L-aspartate + ATP = L-aspartyl-tRNA(Asp) + AMP + diphosphate. In terms of biological role, catalyzes the attachment of L-aspartate to tRNA(Asp) in a two-step reaction: L-aspartate is first activated by ATP to form Asp-AMP and then transferred to the acceptor end of tRNA(Asp). In Buchnera aphidicola subsp. Schizaphis graminum (strain Sg), this protein is Aspartate--tRNA ligase.